The primary structure comprises 1486 residues: MIERGKFRSLTLINWNGFFARTFDLDELVTTLSGGNGAGKSTTMAAFVTALIPDLTLLHFRNTTEAGATSGSRDKGLHGKLKAGVCYSMLDTINSRHQRVVVGVRLQQVAGRDRKVDIKPFAIQGLPMSVQPTQLVTETLNERQARVLPLNELKDKLEAMEGVQFKQFNSITDYHSLMFDLGIIARRLRSASDRSKFYRLIEASLYGGISSAITRSLRDYLLPENSGVRKAFQDMEAALRENRMTLEAIRVTQSDRDLFKHLISEATNYVAADYMRHANERRVHLDKALEFRRELHTSRQQLAAEQYKHVDMARELAEHNGAEGDLEADYQAASDHLNLVQTALRQQEKIERYEADLDELQIRLEEQNEVVAEAIERQEENEARAEAAELEVDELKSQLADYQQALDVQQTRAIQYNQAIAALNRAKELCHLPDLTADSAAEWLETFQAKELEATEKMLSLEQKMSMAQTAHSQFEQAYQLVVAINGPLARNEAWDVARELLREGVDQRHLAEQVQPLRMRLSELEQRLREQQEAERLLADFCKRQGKNFDIDELEALHQELEARIASLSDSVSNAREERMALRQEQEQLQSRIQSLMQRAPVWLAAQNSLNQLSEQCGEEFTSSQDVTEYLQQLLEREREAIVERDEVGARKNAVDEEIERLSQPGGSEDQRLNALAERFGGVLLSEIYDDVSLEDAPYFSALYGPSRHAIVVPDLSQVTEHLEGLTDCPEDLYLIEGDPQSFDDSVFSVDELEKAVVVKIADRQWRYSRFPEVPLFGRAARESRIESLHAEREVLSERFATLSFDVQKTQRLHQAFSRFIGSHLAVAFESDPEAEIRQLNSRRVELERALSNHENDNQQQRIQFEQAKEGVTALNRILPRLNLLADDSLADRVDEIRERLDEAQEAARFVQQFGNQLAKLEPIVSVLQSDPEQFEQLKEDYAYSQQMQRDARQQAFALTEVVQRRAHFSYSDSAEMLSGNSDLNEKLRERLEQAEAERTRAREALRGHAAQLSQYNQVLASLKSSYDTKKELLNDLQRELQDIGVRADSGAEERARIRRDELHAQLSNNRSRRNQLEKALTFCEAEMDNLTRKLRKLERDYFEMREQVVTAKAGWCAVMRMVKDNGVERRLHRRELAYLSADDLRSMSDKALGALRLAVADNEHLRDVLRMSEDPKRPERKIQFFVAVYQHLRERIRQDIIRTDDPVEAIEQMEIELSRLTEELTSREQKLAISSRSVANIIRKTIQREQNRIRMLNQGLQNVSFGQVNSVRLNVNVRETHAMLLDVLSEQHEQHQDLFNSNRLTFSEALAKLYQRLNPQIDMGQRTPQTIGEELLDYRNYLEMEVEVNRGSDGWLRAESGALSTGEAIGTGMSILVMVVQSWEDESRRLRGKDISPCRLLFLDEAARLDARSIATLFELCERLQMQLIIAAPENISPEKGTTYKLVRKVFLNTEHVHVVGLRGFAPQLPETLPGTDEAPSQAS.

Position 34 to 41 (34 to 41) interacts with ATP; sequence GGNGAGKS. 3 coiled-coil regions span residues 326-418, 444-480, and 509-603; these read LEAD…QYNQ, LETF…QAYQ, and RHLA…RAPV. The interval 666–783 is flexible hinge; sequence PGGSEDQRLN…EVPLFGRAAR (118 aa). Coiled-coil stretches lie at residues 835–923, 977–1115, and 1209–1266; these read EAEI…AKLE, EMLS…TAKA, and VEAI…QNVS.

The protein belongs to the SMC family. MukB subfamily. As to quaternary structure, homodimerization via its hinge domain. Binds to DNA via its C-terminal region. Interacts, and probably forms a ternary complex, with MukE and MukF via its C-terminal region. The complex formation is stimulated by calcium or magnesium. Interacts with tubulin-related protein FtsZ.

The protein resides in the cytoplasm. It localises to the nucleoid. Its function is as follows. Plays a central role in chromosome condensation, segregation and cell cycle progression. Functions as a homodimer, which is essential for chromosome partition. Involved in negative DNA supercoiling in vivo, and by this means organize and compact chromosomes. May achieve or facilitate chromosome segregation by condensation DNA from both sides of a centrally located replisome during cell division. The sequence is that of Chromosome partition protein MukB from Escherichia coli O9:H4 (strain HS).